A 292-amino-acid polypeptide reads, in one-letter code: Protein/nucleic acid deglycase HchA (292 aa).

Residues methionine 1–proline 12 show a composition bias toward polar residues. Residues methionine 1–phenylalanine 23 form a disordered region. The active-site Nucleophile is cysteine 190.

Belongs to the peptidase C56 family. HchA subfamily.

Its subcellular location is the cytoplasm. It catalyses the reaction N(omega)-(1-hydroxy-2-oxopropyl)-L-arginyl-[protein] + H2O = lactate + L-arginyl-[protein] + H(+). The catalysed reaction is N(6)-(1-hydroxy-2-oxopropyl)-L-lysyl-[protein] + H2O = lactate + L-lysyl-[protein] + H(+). The enzyme catalyses S-(1-hydroxy-2-oxopropyl)-L-cysteinyl-[protein] + H2O = lactate + L-cysteinyl-[protein] + H(+). It carries out the reaction N(omega)-(1-hydroxy-2-oxoethyl)-L-arginyl-[protein] + H2O = L-arginyl-[protein] + glycolate + H(+). It catalyses the reaction N(6)-(1-hydroxy-2-oxoethyl)-L-lysyl-[protein] + H2O = glycolate + L-lysyl-[protein] + H(+). The catalysed reaction is S-(1-hydroxy-2-oxoethyl)-L-cysteinyl-[protein] + H2O = glycolate + L-cysteinyl-[protein] + H(+). The enzyme catalyses N(2)-(1-hydroxy-2-oxopropyl)-dGTP + H2O = lactate + dGTP + H(+). It carries out the reaction N(2)-(1-hydroxy-2-oxopropyl)-GTP + H2O = lactate + GTP + H(+). It catalyses the reaction N(2)-(1-hydroxy-2-oxopropyl)-GDP + H2O = lactate + GDP + H(+). The catalysed reaction is N(2)-(1-hydroxy-2-oxopropyl)-GMP + H2O = lactate + GMP + H(+). The enzyme catalyses N(2)-(1-hydroxy-2-oxoethyl)-dGTP + H2O = dGTP + glycolate + H(+). It carries out the reaction N(2)-(1-hydroxy-2-oxoethyl)-GTP + H2O = glycolate + GTP + H(+). It catalyses the reaction N(2)-(1-hydroxy-2-oxoethyl)-GDP + H2O = glycolate + GDP + H(+). The catalysed reaction is N(2)-(1-hydroxy-2-oxoethyl)-GMP + H2O = glycolate + GMP + H(+). The enzyme catalyses an N(2)-(1-hydroxy-2-oxopropyl)-guanosine in RNA + H2O = a guanosine in RNA + lactate + H(+). It carries out the reaction an N(2)-(1-hydroxy-2-oxopropyl)-2'-deoxyguanosine in DNA + H2O = a 2'-deoxyguanosine in DNA + lactate + H(+). It catalyses the reaction an N(2)-(1-hydroxy-2-oxoethyl)-guanosine in RNA + H2O = a guanosine in RNA + glycolate + H(+). The catalysed reaction is an N(2)-(1-hydroxy-2-oxoethyl)-2'-deoxyguanosine in DNA + H2O = a 2'-deoxyguanosine in DNA + glycolate + H(+). Its function is as follows. Protein and nucleotide deglycase that catalyzes the deglycation of the Maillard adducts formed between amino groups of proteins or nucleotides and reactive carbonyl groups of glyoxals. Thus, functions as a protein deglycase that repairs methylglyoxal- and glyoxal-glycated proteins, and releases repaired proteins and lactate or glycolate, respectively. Deglycates cysteine, arginine and lysine residues in proteins, and thus reactivates these proteins by reversing glycation by glyoxals. Acts on early glycation intermediates (hemithioacetals and aminocarbinols), preventing the formation of Schiff bases and advanced glycation endproducts (AGE). Also functions as a nucleotide deglycase able to repair glycated guanine in the free nucleotide pool (GTP, GDP, GMP, dGTP) and in DNA and RNA. Is thus involved in a major nucleotide repair system named guanine glycation repair (GG repair), dedicated to reversing methylglyoxal and glyoxal damage via nucleotide sanitization and direct nucleic acid repair. Plays an important role in protecting cells from carbonyl stress. This chain is Protein/nucleic acid deglycase HchA, found in Staphylococcus aureus (strain bovine RF122 / ET3-1).